The following is a 258-amino-acid chain: Indole-3-glycerol phosphate synthase (258 aa).

Belongs to the TrpC family.

It carries out the reaction 1-(2-carboxyphenylamino)-1-deoxy-D-ribulose 5-phosphate + H(+) = (1S,2R)-1-C-(indol-3-yl)glycerol 3-phosphate + CO2 + H2O. It participates in amino-acid biosynthesis; L-tryptophan biosynthesis; L-tryptophan from chorismate: step 4/5. The sequence is that of Indole-3-glycerol phosphate synthase from Legionella pneumophila (strain Lens).